Reading from the N-terminus, the 37-residue chain is Large ribosomal subunit protein bL36 (37 aa).

The protein belongs to the bacterial ribosomal protein bL36 family.

The protein is Large ribosomal subunit protein bL36 of Staphylococcus epidermidis (strain ATCC 35984 / DSM 28319 / BCRC 17069 / CCUG 31568 / BM 3577 / RP62A).